Reading from the N-terminus, the 474-residue chain is Glutamate--tRNA ligase 1 (474 aa).

Positions 11–21 (PSPTGFLHIGG) match the 'HIGH' region motif. The segment covering 113–133 (TARAEGRAPRYDGRWRDRDPS) has biased composition (basic and acidic residues). The interval 113–136 (TARAEGRAPRYDGRWRDRDPSEAP) is disordered. Residues 240–244 (KLSKR) carry the 'KMSKS' region motif. An ATP-binding site is contributed by Lys243.

It belongs to the class-I aminoacyl-tRNA synthetase family. Glutamate--tRNA ligase type 1 subfamily. In terms of assembly, monomer.

It localises to the cytoplasm. The catalysed reaction is tRNA(Glu) + L-glutamate + ATP = L-glutamyl-tRNA(Glu) + AMP + diphosphate. Catalyzes the attachment of glutamate to tRNA(Glu) in a two-step reaction: glutamate is first activated by ATP to form Glu-AMP and then transferred to the acceptor end of tRNA(Glu). The chain is Glutamate--tRNA ligase 1 from Methylorubrum extorquens (strain PA1) (Methylobacterium extorquens).